A 478-amino-acid chain; its full sequence is Sorting nexin-4 (478 aa).

Basic and acidic residues predominate over residues 1–10; the sequence is MAVIDQHQDD. The tract at residues 1–56 is disordered; it reads MAVIDQHQDDFSNVSWNTDEHTAAESSSSVTATEFDDTERNGHNAYESDAPGSDGQ. Positions 24–33 are enriched in low complexity; the sequence is AESSSSVTAT. The 123-residue stretch at 58-180 folds into the PX domain; that stretch reads VLDCVVSEPL…IFLESPDWNA (123 aa). A 1,2-diacyl-sn-glycero-3-phospho-(1D-myo-inositol-3-phosphate) contacts are provided by arginine 101, threonine 103, lysine 127, and arginine 146. The disordered stretch occupies residues 459 to 478; it reads EGVSGTRSTGVEPPGRRLAD.

This sequence belongs to the sorting nexin family. As to quaternary structure, interacts with the mitochondrial prohibitin complex subunits PHB1 and PHB2; the interaction is direct and plays a role in mitophagy.

It is found in the cytoplasm. The protein localises to the cytosol. It localises to the preautophagosomal structure membrane. Its subcellular location is the endosome membrane. The protein resides in the mitochondrion membrane. It is found in the lipid droplet. Functionally, sorting nexin, involved in the separation or division of vacuoles throughout the entire life cycle of the cells. Involved in retrieval of late-Golgi SNAREs from post-Golgi endosomes to the trans-Golgi network, for cytoplasm to vacuole transport (Cvt), and autophagy of large cargos including mitophagy, pexophagy and glycophagy. Required for the switch to necrotrophic growth. This is Sorting nexin-4 from Colletotrichum higginsianum (strain IMI 349063) (Crucifer anthracnose fungus).